A 409-amino-acid polypeptide reads, in one-letter code: N-acetylglucosamine-6-phosphate deacetylase (409 aa).

Position 143 (glutamate 143) interacts with a divalent metal cation. A substrate-binding site is contributed by 154 to 155 (AH). The a divalent metal cation site is built by histidine 211 and histidine 232. Substrate-binding positions include 235 to 236 (NA), arginine 243, and 269 to 272 (DGIH). Residue aspartate 294 is the Proton donor/acceptor of the active site. 328 to 330 (LSG) contributes to the substrate binding site.

It belongs to the metallo-dependent hydrolases superfamily. NagA family. The cofactor is a divalent metal cation.

It carries out the reaction N-acetyl-D-glucosamine 6-phosphate + H2O = D-glucosamine 6-phosphate + acetate. It participates in amino-sugar metabolism; N-acetylneuraminate degradation. In terms of biological role, hydrolyzes the N-glycolyl group from N-glycolylglucosamine 6-phosphate (GlcNGc-6-P) in the N-glycolylneuraminic acid (Neu5Gc) degradation pathway. The polypeptide is N-acetylglucosamine-6-phosphate deacetylase (Amdhd2) (Rattus norvegicus (Rat)).